Here is a 134-residue protein sequence, read N- to C-terminus: MWSDPIADMLTRIRNANVALKEQVDVPASNLKKEIAEILKREGFIKDYTYIEDGKQGIIRIHMKYKGTRRNRERVIHGIVRVSKPGRRIYVGKDNLPKVKNGLGIAILTTSKGVLTDKQAREIGVGGEVIAYIW.

The protein belongs to the universal ribosomal protein uS8 family. In terms of assembly, part of the 30S ribosomal subunit. Contacts proteins S5 and S12.

In terms of biological role, one of the primary rRNA binding proteins, it binds directly to 16S rRNA central domain where it helps coordinate assembly of the platform of the 30S subunit. In Thermosipho africanus (strain TCF52B), this protein is Small ribosomal subunit protein uS8.